Consider the following 230-residue polypeptide: MATATPPPQDFPPYPPFTSLRLAAARDVAQMANLSVQGFKDSEIFRYERPGHDQYPEDAVAYFANLYRDRLEDPRAVVIVAEDWDGAERVVVGVGCWILPQDSPRTGQFVVPCVGDREPALDRDLCCRRLELFNAVTKATEERYLDGKVICDKFVVHPSYQRRGHGTAMLRWSLRLCTQDTVDQGVIPSHVGEPVYLSLGFEVIGEMHVPDEGDTQGFTQRVAVYKARQT.

Residues 143-230 enclose the N-acetyltransferase domain; the sequence is RYLDGKVICD…RVAVYKARQT (88 aa).

It participates in mycotoxin biosynthesis. Functionally, acetyltransferase; part of the satratoxin SC3 cluster involved in the biosynthesis of satratoxins, trichothecene mycotoxins that are associated with human food poisonings. Satratoxins are suggested to be made by products of multiple gene clusters (SC1, SC2 and SC3) that encode 21 proteins in all, including polyketide synthases, acetyltransferases, and other enzymes expected to modify the trichothecene skeleton. SC1 encodes 10 proteins, SAT1 to SAT10. The largest are SAT8, which encodes a putative polyketide synthase (PKS) with a conventional non-reducing architecture, and SAT10, a putative protein containing four ankyrin repeats and thus may be involved in protein scaffolding. The putative short-chain reductase SAT3 may assist the PKS in some capacity. SAT6 contains a secretory lipase domain and acts probably as a trichothecene esterase. SAT5 encodes a putative acetyltransferase, and so, with SAT6, may affect endogenous protection from toxicity. The probable transcription factor SAT9 may regulate the expression of the SC1 cluster. SC2 encodes proteins SAT11 to SAT16, the largest of which encodes the putative reducing PKS SAT13. SAT11 is a cytochrome P450 monooxygenase, while SAT14 and SAT16 are probable acetyltransferases. The SC2 cluster may be regulated by the transcription factor SAT15. SC3 is a small cluster that encodes 5 proteins, SAT17 to SAT21. SAT21 is a putative MFS-type transporter which may have a role in exporting secondary metabolites. The four other proteins putatively encoded in SC3 include the taurine hydroxylase-like protein SAT17, the O-methyltransferase SAT18, the acetyltransferase SAT19, and the Cys6-type zinc finger SAT20, the latter being probably involved in regulation of SC3 expression. This chain is Acetyltransferase, found in Stachybotrys chartarum (strain CBS 109288 / IBT 7711) (Toxic black mold).